The following is a 492-amino-acid chain: Probable ATP-citrate synthase subunit 2 (492 aa).

Ser-24 carries the post-translational modification Phosphoserine.

It in the N-terminal section; belongs to the succinate/malate CoA ligase beta subunit family. This sequence in the C-terminal section; belongs to the succinate/malate CoA ligase alpha subunit family. As to quaternary structure, composed of two subunits.

The protein localises to the cytoplasm. Its subcellular location is the nucleus. The enzyme catalyses oxaloacetate + acetyl-CoA + ADP + phosphate = citrate + ATP + CoA. In terms of biological role, ATP citrate-lyase is the primary enzyme responsible for the synthesis of cytosolic acetyl-CoA. Has a central role in de novo lipid synthesis. The sequence is that of Probable ATP-citrate synthase subunit 2 from Schizosaccharomyces pombe (strain 972 / ATCC 24843) (Fission yeast).